The chain runs to 1046 residues: Hemoglobin-haptoglobin-binding protein A (1046 aa).

A signal peptide spans 1–24 (MTNFRLNLLAYSVMLGLTAGVAYA). 4 tandem repeats follow at residues 26–29 (QPTN), 30–33 (QPTN), 34–37 (QPTN), and 38–41 (QPTN). Residues 26–41 (QPTNQPTNQPTNQPTN) are 4 X 4 AA tandem repeats of Q-P-T-N. A TonB box motif is present at residues 51–58 (EQINVLGS). The TBDR plug domain occupies 61-188 (HNDNTPPKIA…LGGSVSFDTK (128 aa)). The 851-residue stretch at 196-1046 (NKNYYASYKR…NYRMSVQFEF (851 aa)) folds into the TBDR beta-barrel domain. The short motif at 1029–1046 (NRFYAPGRNYRMSVQFEF) is the TonB C-terminal box element.

It belongs to the TonB-dependent receptor family. Hemoglobin/haptoglobin binding protein subfamily.

It is found in the cell outer membrane. Functionally, acts as a receptor for the hemoglobin/haptoglobin complex of the human host and is required for heme uptake. Does not bind hemoglobin alone. The chain is Hemoglobin-haptoglobin-binding protein A (hhuA) from Haemophilus influenzae.